Here is a 496-residue protein sequence, read N- to C-terminus: MEKSQGYLELDKSWRHDFLYPLIFQEYIYALAHEQGLNRSILVENTDHDNKYSSLIVKRLITLIYQQNHFLIFDNDSNQNPFWKHNNNLYSQTISEGFVIIVEIPFSPRFVDSLEEKKKILKSNNLRSIHSIFPFLEDQILHLNFVANILIPYPIHLEIVVQSLRYRVKDASSLHLLRFFLFTLNKSISSFSKRNQRFFLFLYNSHVYEYESTFLFLRNKTSHLRSTSSGAFLERIFFYGKIKHLIEVFANDFQAILWLFKDPFMHYVRYQGKSILASKRTSLRMNKWKYYLVNFWQCQFYVWSQPGRVSINQLSNHSLDFLGYLSSVRRNPLAVRSQMLENSFLTDNAIKKFDIIVLLISLIGSLAKAKFCNVLGHPLSKPARADSSDSDIIERFVRICRNLSHYHSGSSKKKSLYRIKYILRLSCARTLARKHKTTVRSFLKRLGSELLEEFLTEDGQVISLIFPRTSSTSWRLYRGGIWYLDITCINDLANHE.

Belongs to the intron maturase 2 family. MatK subfamily.

The protein resides in the plastid. Its subcellular location is the chloroplast. In terms of biological role, usually encoded in the trnK tRNA gene intron. Probably assists in splicing its own and other chloroplast group II introns. This is Maturase K from Paeonia officinalis (Common peony).